A 185-amino-acid chain; its full sequence is MIQETLQSAEEQMDRTIEATREDFVSVRTGRANPGLYSKVMVDYYGSFTPLQQLASFTTTDARTLLITPFDQSALRNIEKALSESEVGANPSNDGKVIRIVMPELTAERRKEYVKLVKSKAEEHKISVRNARRKAKEAMDKAVKDGEVGEDEGARGEKELDALTKRHVELIDEMAKNKEQELLEV.

The segment at 138 to 160 (AMDKAVKDGEVGEDEGARGEKEL) is disordered.

This sequence belongs to the RRF family.

It is found in the cytoplasm. Functionally, responsible for the release of ribosomes from messenger RNA at the termination of protein biosynthesis. May increase the efficiency of translation by recycling ribosomes from one round of translation to another. This chain is Ribosome-recycling factor, found in Micrococcus luteus (strain ATCC 4698 / DSM 20030 / JCM 1464 / CCM 169 / CCUG 5858 / IAM 1056 / NBRC 3333 / NCIMB 9278 / NCTC 2665 / VKM Ac-2230) (Micrococcus lysodeikticus).